A 187-amino-acid chain; its full sequence is MIVLRSKSPRRKQILESLDLDFRIESEDIDESSLKDEHPLEYLKRISLSKLGTRSKDELLISCDTIVVQENSILQKPENFSQAIEMLERLSGKTHIVYSGLGIYYNRLEQFAFDSSKVHFHTWNKEQIKKYIERYSPFDKAGSYGVQDIEGPVQSFEGSYTNILGFPIRMFFQYHELWKKYLKGNQA.

Aspartate 64 (proton acceptor) is an active-site residue.

This sequence belongs to the Maf family. YhdE subfamily. A divalent metal cation serves as cofactor.

It is found in the cytoplasm. The catalysed reaction is dTTP + H2O = dTMP + diphosphate + H(+). It carries out the reaction UTP + H2O = UMP + diphosphate + H(+). In terms of biological role, nucleoside triphosphate pyrophosphatase that hydrolyzes dTTP and UTP. May have a dual role in cell division arrest and in preventing the incorporation of modified nucleotides into cellular nucleic acids. In Leptospira interrogans serogroup Icterohaemorrhagiae serovar Lai (strain 56601), this protein is dTTP/UTP pyrophosphatase.